The sequence spans 319 residues: 4-diphosphocytidyl-2-C-methyl-D-erythritol kinase (319 aa).

Lysine 18 is an active-site residue. 103–113 (PIGAGLAGGST) is a binding site for ATP. The active site involves aspartate 145.

It belongs to the GHMP kinase family. IspE subfamily.

The enzyme catalyses 4-CDP-2-C-methyl-D-erythritol + ATP = 4-CDP-2-C-methyl-D-erythritol 2-phosphate + ADP + H(+). It participates in isoprenoid biosynthesis; isopentenyl diphosphate biosynthesis via DXP pathway; isopentenyl diphosphate from 1-deoxy-D-xylulose 5-phosphate: step 3/6. Catalyzes the phosphorylation of the position 2 hydroxy group of 4-diphosphocytidyl-2C-methyl-D-erythritol. The chain is 4-diphosphocytidyl-2-C-methyl-D-erythritol kinase from Prochlorococcus marinus (strain NATL1A).